A 328-amino-acid polypeptide reads, in one-letter code: D-cysteine desulfhydrase (328 aa).

An N6-(pyridoxal phosphate)lysine modification is found at Lys51.

The protein belongs to the ACC deaminase/D-cysteine desulfhydrase family. As to quaternary structure, homodimer. Pyridoxal 5'-phosphate is required as a cofactor.

It catalyses the reaction D-cysteine + H2O = hydrogen sulfide + pyruvate + NH4(+) + H(+). Catalyzes the alpha,beta-elimination reaction of D-cysteine and of several D-cysteine derivatives. It could be a defense mechanism against D-cysteine. The protein is D-cysteine desulfhydrase of Escherichia coli (strain UTI89 / UPEC).